Reading from the N-terminus, the 790-residue chain is Nitrogen permease reactivator protein (790 aa).

Positions 1–68 (MSSLTRLLQE…DRNRANVPVP (68 aa)) are disordered. A compositionally biased stretch (polar residues) spans 16-38 (TSNSSPRTSADTLTTTPESQSLD). Over residues 46 to 58 (SSHIGSVSNSSSS) the composition is skewed to low complexity. S47 carries the post-translational modification Phosphoserine; by autocatalysis. S85, S90, S100, S111, S116, S125, S137, and S141 each carry phosphoserine. A compositionally biased stretch (polar residues) spans 151-175 (RLSTTSHTSGRAIPSLSSSIPYSVP). Disordered stretches follow at residues 151-188 (RLST…NSNS) and 234-258 (LQKA…SGSF). Residues 176 to 188 (NSNKDNNSSNSNS) are compositionally biased toward low complexity. Residues 238–248 (SMDSNNANATQ) are compositionally biased toward polar residues. Residues 249–258 (SRSISRSGSF) are compositionally biased toward low complexity. S257 carries the phosphoserine; by autocatalysis modification. S259, S260, S288, S292, S317, S320, and S328 each carry phosphoserine. Over residues 276 to 289 (NSNSAGMSFSANSN) the composition is skewed to low complexity. Residues 276–357 (NSNSAGMSFS…QSVPRSQHSS (82 aa)) are disordered. Polar residues-rich tracts occupy residues 290-305 (GPSP…NGST), 314-339 (RQSS…SPSS), and 346-357 (PSQSVPRSQHSS). The residue at position 334 (Y334) is a Phosphotyrosine. 3 positions are modified to phosphoserine: S336, S353, and S356. Position 357 is a phosphoserine; by autocatalysis (S357). At S385 the chain carries Phosphoserine. The Protein kinase domain maps to 438 to 742 (IKTGADLGAG…IEEIMEDPWI (305 aa)). ATP is bound by residues 444-452 (LGAGAGGSV) and K467. D561 (proton acceptor) is an active-site residue. 2 disordered regions span residues 666-704 (LVTR…NIGP) and 766-790 (HHTQ…QNNQ). The segment covering 677–688 (DESHSTEKKKPE) has biased composition (basic and acidic residues). The segment covering 689–701 (SSSNNVSDPNNVN) has biased composition (low complexity).

It belongs to the protein kinase superfamily. Ser/Thr protein kinase family. In terms of assembly, interacts with TIP41. Post-translationally, hyperphosphorylated in nitrogen-rich growth medium. Nitrogen limitation (or rapamycin treatment) leads to substantial, though not complete dephosphorylation. Autophosphorylation plays only a minor role and seems not to be regulated by the quality of the nitrogen source.

Its subcellular location is the cytoplasm. It catalyses the reaction L-seryl-[protein] + ATP = O-phospho-L-seryl-[protein] + ADP + H(+). The catalysed reaction is L-threonyl-[protein] + ATP = O-phospho-L-threonyl-[protein] + ADP + H(+). Its activity is regulated as follows. Dephosphorylation by SIT4 activates NPR1 kinase activity. In terms of biological role, nutrient-regulated protein kinase that promotes the activity of at least 6 distinct transport systems for nitrogenous nutrients under conditions of nitrogen catabolite derepression. Under poor nitrogen growth conditions, required for post-Golgi sorting of the general amino acid permease GAP1 and the three known ammonia permeases, MEP1/2/3, to the plasma membrane. Also contributes to the stability and the retention of GAP1 at the plasma membrane. Inversely, promotes the degradation of tryptophan permease TAT2 under the same conditions. Activity is regulated by the TOR signaling pathway via phosphatase SIT4. Although thought to be involved in regulation of GLN3-dependent transcription by nitrogen catabolite repression, this seems to be an indirect effect from the reduced uptake of the nitrogen-repressing compound. The sequence is that of Nitrogen permease reactivator protein (NPR1) from Saccharomyces cerevisiae (strain ATCC 204508 / S288c) (Baker's yeast).